The following is a 226-amino-acid chain: 2-amino-5-formylamino-6-ribosylaminopyrimidin-4(3H)-one 5'-monophosphate deformylase (226 aa).

Fe cation-binding residues include Glu29, His31, Asp40, and His108.

The protein belongs to the creatininase superfamily. FAPy deformylase family. In terms of assembly, homodimer. Fe(2+) serves as cofactor. Zn(2+) is required as a cofactor.

It carries out the reaction 2-amino-5-formylamino-6-(5-phospho-D-ribosylamino)pyrimidin-4(3H)-one + H2O = 2,5-diamino-6-(1-D-ribosylamino)pyrimidin-4(3H)-one 5'-phosphate + formate + H(+). It functions in the pathway cofactor biosynthesis; coenzyme F420 biosynthesis. Its pathway is cofactor biosynthesis; riboflavin biosynthesis. Its function is as follows. Catalyzes the hydrolysis of the formamide of 2-amino-5-formylamino-6-ribosylamino-4(3H)-pyrimidinone 5'-monophosphate (FAPy) to form 2,5-diamino-6-ribosylamino-4(3H)-pyrimidinone 5'-phosphate (APy). This Methanocaldococcus vulcanius (strain ATCC 700851 / DSM 12094 / M7) (Methanococcus vulcanius) protein is 2-amino-5-formylamino-6-ribosylaminopyrimidin-4(3H)-one 5'-monophosphate deformylase.